Consider the following 203-residue polypeptide: Probable metallo-hydrolase MJ0296 (203 aa).

The Zn(2+) site is built by H86, H88, D90, H91, H135, D152, and H193.

This sequence belongs to the metallo-beta-lactamase superfamily. The cofactor is Zn(2+).

This chain is Probable metallo-hydrolase MJ0296, found in Methanocaldococcus jannaschii (strain ATCC 43067 / DSM 2661 / JAL-1 / JCM 10045 / NBRC 100440) (Methanococcus jannaschii).